A 311-amino-acid chain; its full sequence is Mediator of RNA polymerase II transcription subunit 27-A (311 aa).

This sequence belongs to the Mediator complex subunit 27 family. As to quaternary structure, component of the Mediator complex.

It localises to the nucleus. Functionally, component of the Mediator complex, a coactivator involved in the regulated transcription of nearly all RNA polymerase II-dependent genes. Mediator functions as a bridge to convey information from gene-specific regulatory proteins to the basal RNA polymerase II transcription machinery. Mediator is recruited to promoters by direct interactions with regulatory proteins and serves as a scaffold for the assembly of a functional preinitiation complex with RNA polymerase II and the general transcription factors. This chain is Mediator of RNA polymerase II transcription subunit 27-A (med27-a), found in Xenopus laevis (African clawed frog).